The chain runs to 253 residues: Low affinity immunoglobulin gamma Fc region receptor III-B (253 aa).

Residues 1–20 (MGQPLPPVALLLLVSASSRA) form the signal peptide. Over 21–207 (ADVPKALVLL…VSSSVLPWHQ (187 aa)) the chain is Extracellular. Ig-like C2-type domains follow at residues 24-105 (PKAL…LRVH) and 120-189 (EGEP…VTIT). 2 disulfide bridges follow: cysteine 47-cysteine 89 and cysteine 128-cysteine 172. N-linked (GlcNAc...) asparagine glycans are attached at residues asparagine 56, asparagine 63, asparagine 165, and asparagine 180. Residues 208–226 (IAFCLVMGLLLAADTGLYF) traverse the membrane as a helical segment. Residues 227 to 253 (SVQRDLRSSQRARKEHTLGWSLGSQDK) are Cytoplasmic-facing.

As to quaternary structure, forms a heterooligomeric complex with ITAM-containing signaling subunits FCER1G. Interacts (via transmembrane domain) with signaling subunits; this interaction is a prerequisite for receptor complex expression on the cell surface and intracellular signal transduction. Binds the Fc region of antigen-complexed IgG.

The protein resides in the cell membrane. Receptor for the invariable Fc fragment of immunoglobulin gamma (IgG). Optimally activated upon binding of clustered antigen-IgG complexes displayed on cell surfaces, triggers lysis of antibody-coated cells, a process known as antibody-dependent cellular cytotoxicity (ADCC). Does not bind free monomeric IgG, thus avoiding inappropriate effector cell activation in the absence of antigenic trigger. Mediates IgG effector functions on natural killer (NK) cells. Binds antigen-IgG complexes generated upon infection and triggers NK cell-dependent cytokine production and degranulation to limit viral load and propagation. Fc-binding subunit that associates with FCER1G adapters to form functional signaling complexes. Following the engagement of antigen-IgG complexes, triggers phosphorylation of immunoreceptor tyrosine-based activation motif (ITAM)-containing adapters with subsequent activation of phosphatidylinositol 3-kinase signaling and sustained elevation of intracellular calcium that ultimately drive NK cell activation. Mediates enhanced ADCC in response to afucosylated IgGs. The polypeptide is Low affinity immunoglobulin gamma Fc region receptor III-B (FCGR3B) (Oryctolagus cuniculus (Rabbit)).